We begin with the raw amino-acid sequence, 383 residues long: BRISC and BRCA1-A complex member 2 (383 aa).

M1 is subject to N-acetylmethionine. A Phosphoserine modification is found at S2. UEV-like stretches follow at residues 30–147 (DATN…TLLE) and 275–364 (IAAF…RAKA).

This sequence belongs to the BABAM2 family. As to quaternary structure, component of the ARISC complex, at least composed of UIMC1/RAP80, ABRAXAS1, BRCC3/BRCC36, BABAM2 and BABAM1/NBA1. Component of the BRCA1-A complex, at least composed of BRCA1, BARD1, UIMC1/RAP80, ABRAXAS1, BRCC3/BRCC36, BABAM2 and BABAM1/NBA1. In the BRCA1-A complex, interacts directly with ABRAXAS1, BRCC3/BRCC36 and BABAM1/NBA1. Binds polyubiquitin. Component of the BRISC complex, at least composed of ABRAXAS2, BRCC3/BRCC36, BABAM2 and BABAM1/NBA1. Identified in a complex with SHMT2 and the other subunits of the BRISC complex. Component of the BRCA1/BRCA2 containing complex (BRCC), which also contains BRCA1, BRCA2, BARD1, BRCC3/BRCC36 and RAD51. BRCC is a ubiquitin E3 ligase complex that enhances cellular survival following DNA damage. May interact with FAS and TNFRSF1A.

It is found in the cytoplasm. The protein localises to the nucleus. In terms of biological role, component of the BRCA1-A complex, a complex that specifically recognizes 'Lys-63'-linked ubiquitinated histones H2A and H2AX at DNA lesions sites, leading to target the BRCA1-BARD1 heterodimer to sites of DNA damage at double-strand breaks (DSBs). The BRCA1-A complex also possesses deubiquitinase activity that specifically removes 'Lys-63'-linked ubiquitin on histones H2A and H2AX. In the BRCA1-A complex, it acts as an adapter that bridges the interaction between BABAM1/NBA1 and the rest of the complex, thereby being required for the complex integrity and modulating the E3 ubiquitin ligase activity of the BRCA1-BARD1 heterodimer. Component of the BRISC complex, a multiprotein complex that specifically cleaves 'Lys-63'-linked ubiquitin in various substrates. Within the BRISC complex, acts as an adapter that bridges the interaction between BABAM1/NBA1 and the rest of the complex, thereby being required for the complex integrity. The BRISC complex is required for normal mitotic spindle assembly and microtubule attachment to kinetochores via its role in deubiquitinating NUMA1. The BRISC complex plays a role in interferon signaling via its role in the deubiquitination of the interferon receptor IFNAR1; deubiquitination increases IFNAR1 activity by enhancing its stability and cell surface expression. Down-regulates the response to bacterial lipopolysaccharide (LPS) via its role in IFNAR1 deubiquitination. May play a role in homeostasis or cellular differentiation in cells of neural, epithelial and germline origins. May also act as a death receptor-associated anti-apoptotic protein, which inhibits the mitochondrial apoptotic pathway. May regulate TNF-alpha signaling through its interactions with TNFRSF1A; however these effects may be indirect. The protein is BRISC and BRCA1-A complex member 2 of Rattus norvegicus (Rat).